The sequence spans 595 residues: Alpha-1,3-galactosidase B (595 aa).

A signal peptide spans 1–22 (MKTILLFALSLLLSLSVSDVCA). 3 PbH1 repeats span residues 432-454 (TPEVLFAGNTIRNNRARGTLFST), 455-477 (PKKTVVEDNLFDHTSGTAILLCG), and 488-541 (CRDV…VIED).

It belongs to the glycosyl hydrolase 110 family. B subfamily.

It carries out the reaction Hydrolysis of terminal, non-reducing branched (1-&gt;3)-alpha-D-galactosidic residues, producing free D-galactose.. It catalyses the reaction Hydrolysis of terminal, non-reducing linear (1-&gt;3)-alpha-D-galactosidic residues, producing free D-galactose.. The enzyme catalyses Hydrolysis of terminal, non-reducing alpha-D-galactose residues in alpha-D-galactosides, including galactose oligosaccharides, galactomannans and galactolipids.. Alpha-galactosidase. Removes both branched alpha-1,3-linked galactose residues of blood group B antigens and linear alpha-1,3-linked galactose structures. The chain is Alpha-1,3-galactosidase B (glaB) from Bacteroides fragilis (strain YCH46).